A 587-amino-acid polypeptide reads, in one-letter code: 5-aminolevulinate synthase, erythroid-specific, mitochondrial (587 aa).

Residues 1–49 (MVTAAMLLQRCPVLIRSPTGLLGKMIKTHQFLFGIGRCPILATQGPSFS) constitute a mitochondrion transit peptide. Arg163 is a binding site for succinyl-CoA. Pyridoxal 5'-phosphate is bound by residues Cys258 and Phe259. Residues Ser280 and Lys299 each contribute to the succinyl-CoA site. 3 residues coordinate pyridoxal 5'-phosphate: Ser332, His360, and Thr388. Residue Lys391 is part of the active site. Lys391 carries the post-translational modification N6-(pyridoxal phosphate)lysine. Residues Thr420 and Thr421 each coordinate pyridoxal 5'-phosphate. Thr508 serves as a coordination point for succinyl-CoA.

The protein belongs to the class-II pyridoxal-phosphate-dependent aminotransferase family. Homodimer. Interacts with SUCLA2. Pyridoxal 5'-phosphate is required as a cofactor.

It localises to the mitochondrion inner membrane. It catalyses the reaction succinyl-CoA + glycine + H(+) = 5-aminolevulinate + CO2 + CoA. It participates in porphyrin-containing compound metabolism; protoporphyrin-IX biosynthesis; 5-aminolevulinate from glycine: step 1/1. Functionally, catalyzes the pyridoxal 5'-phosphate (PLP)-dependent condensation of succinyl-CoA and glycine to form aminolevulinic acid (ALA), with CoA and CO2 as by-products. Contributes significantly to heme formation during erythropoiesis. This is 5-aminolevulinate synthase, erythroid-specific, mitochondrial (ALAS2) from Bos taurus (Bovine).